A 133-amino-acid polypeptide reads, in one-letter code: MGRVRTKTVKKAAKIIIEKYYTRLTLDFDTNKRICEEIAIIPTKPLRNKIAGFATHLMRRLRHSQVRGISIKLQEEERERRDNYVPEVSALEHDIIEVDPDTKDMLKMLDFNNINGLQLTQPATQGGYGGRRN.

It belongs to the eukaryotic ribosomal protein eS17 family.

In Spodoptera frugiperda (Fall armyworm), this protein is Small ribosomal subunit protein eS17 (RpS17).